A 593-amino-acid chain; its full sequence is Transcriptional repressor p66-beta (593 aa).

Position 17 is a phosphoserine (Ser17). Residues Lys33, Lys66, and Lys97 each participate in a glycyl lysine isopeptide (Lys-Gly) (interchain with G-Cter in SUMO2) cross-link. Positions 62-123 are disordered; sequence ELPTKQDGSG…PERGRLTPSP (62 aa). Basic and acidic residues-rich tracts occupy residues 74 to 100 and 108 to 118; these read GYEE…KENI and SARRSEPERGR. Thr120 is modified (phosphothreonine). Phosphoserine occurs at positions 122, 129, 134, and 135. Positions 140 to 194 form a coiled coil; sequence SRMEERLKAANLEMFKGKGIEERQQLIKQLRDELRLEEARLVLLKKLRQSQLQKE. Lys147 is covalently cross-linked (Glycyl lysine isopeptide (Lys-Gly) (interchain with G-Cter in SUMO2)). The tract at residues 165–195 is CR1; interaction with MBD2 and MBD3; that stretch reads LIKQLRDELRLEEARLVLLKKLRQSQLQKEN. A Glycyl lysine isopeptide (Lys-Gly) (interchain with G-Cter in SUMO2) cross-link involves residue Lys199. At Ser208 the chain carries Phosphoserine. The disordered stretch occupies residues 213-235; sequence SPAHVGQQGLSKLPSRPGAQGVE. A Glycyl lysine isopeptide (Lys-Gly) (interchain with G-Cter in SUMO2) cross-link involves residue Lys281. A phosphoserine mark is found at Ser333, Ser338, and Ser340. The CR2; histone tail-binding stretch occupies residues 340–480; that stretch reads SAMTDAANSQ…QEQEIEQRLQ (141 aa). Residues Lys353, Lys454, and Lys467 each participate in a glycyl lysine isopeptide (Lys-Gly) (interchain with G-Cter in SUMO2) cross-link. Residues 414–467 form a GATA-type zinc finger; it reads RVEPFVCAQCRTDFTPHWKQEKNGKILCEQCMTSNQKKALKAEHTNRLKNAFVK. A coiled-coil region spans residues 449–482; it reads QKKALKAEHTNRLKNAFVKALQQEQEIEQRLQQQ. Position 486 is a phosphoserine (Ser486). A Glycyl lysine isopeptide (Lys-Gly) (interchain with G-Cter in SUMO2) cross-link involves residue Lys498.

In terms of assembly, homooligomer. Component of the nucleosome remodeling and deacetylase (NuRD) repressor complex, composed of core proteins MTA1, MTA2, MTA3, RBBP4, RBBP7, HDAC1, HDAC2, MBD2, MBD3, and peripherally associated proteins CDK2AP1, CDK2AP2, GATAD2A, GATAD2B, CHD3, CHD4 and CHD5. The exact stoichiometry of the NuRD complex is unknown, and some subunits such as MBD2 and MBD3, GATAD2A and GATAD2B, and CHD3, CHD4 and CHD5 define mutually exclusive NuRD complexes. Interacts with MBD2; this is required for the enhancement of MBD2-mediated repression and for targeting to the chromatin. Interacts with MBD3. Component of the MeCP1 histone deacetylase complex. Interacts with histone tails, including that of histones H2A, H2B, H3 and H4. Interacts with ERCC6. In terms of tissue distribution, widely expressed.

Its subcellular location is the nucleus speckle. The protein resides in the nucleus. The protein localises to the chromosome. Its function is as follows. Transcriptional repressor. Acts as a component of the histone deacetylase NuRD complex which participates in the remodeling of chromatin. Enhances MBD2-mediated repression. Efficient repression requires the presence of GATAD2A. Targets MBD3 to discrete loci in the nucleus. May play a role in synapse development. The sequence is that of Transcriptional repressor p66-beta (GATAD2B) from Homo sapiens (Human).